A 545-amino-acid chain; its full sequence is Chaperonin GroEL (545 aa).

ATP contacts are provided by residues 29-32, Lys-50, 86-90, Gly-415, and Asp-495; these read TLGP and DGTTT.

The protein belongs to the chaperonin (HSP60) family. In terms of assembly, forms a cylinder of 14 subunits composed of two heptameric rings stacked back-to-back. Interacts with the co-chaperonin GroES.

The protein resides in the cytoplasm. The catalysed reaction is ATP + H2O + a folded polypeptide = ADP + phosphate + an unfolded polypeptide.. Functionally, together with its co-chaperonin GroES, plays an essential role in assisting protein folding. The GroEL-GroES system forms a nano-cage that allows encapsulation of the non-native substrate proteins and provides a physical environment optimized to promote and accelerate protein folding. In Bacteroides thetaiotaomicron (strain ATCC 29148 / DSM 2079 / JCM 5827 / CCUG 10774 / NCTC 10582 / VPI-5482 / E50), this protein is Chaperonin GroEL.